Consider the following 1162-residue polypeptide: Leptin receptor (1162 aa).

An N-terminal signal peptide occupies residues 1–21; the sequence is MTCQKFYVVLLHWEFLYVITA. Residues 22–839 are Extracellular-facing; it reads LNLAYPTSPW…DIAKQQNDAG (818 aa). Disulfide bonds link cysteine 37/cysteine 90, cysteine 89/cysteine 99, cysteine 131/cysteine 142, cysteine 186/cysteine 195, and cysteine 188/cysteine 193. N-linked (GlcNAc...) asparagine glycans are attached at residues asparagine 55, asparagine 56, asparagine 73, and asparagine 98. An N-linked (GlcNAc...) asparagine glycan is attached at asparagine 187. The Fibronectin type-III 1 domain maps to 238-331; sequence PPLGLRMEVT…LPQLFTTQDV (94 aa). 3 N-linked (GlcNAc...) asparagine glycosylation sites follow: asparagine 275, asparagine 345, and asparagine 356. 2 cysteine pairs are disulfide-bonded: cysteine 350/cysteine 410 and cysteine 411/cysteine 416. Residue asparagine 431 is glycosylated (N-linked (GlcNAc...) asparagine). 3 disulfide bridges follow: cysteine 434–cysteine 445, cysteine 471–cysteine 526, and cysteine 486–cysteine 496. Residues 465–482 are leptin-binding; sequence HRRSLYCPDNPSIRPTSE. Residues asparagine 514, asparagine 622, asparagine 657, asparagine 668, asparagine 686, asparagine 695, asparagine 698, and asparagine 726 are each glycosylated (N-linked (GlcNAc...) asparagine). 3 Fibronectin type-III domains span residues 537 to 632, 637 to 729, and 738 to 831; these read PPSN…TLVM, PMRG…NLTF, and AVQS…KDDI. The WSXWS motif motif lies at 620 to 624; sequence WSNWS. The chain crosses the membrane as a helical span at residues 840 to 860; it reads LYVIVPIIISSCVLLLGTLLI. The Cytoplasmic segment spans residues 861-1162; it reads SHQRMKKLFW…IENKMCDLTV (302 aa). The short motif at 869–877 is the Box 1 motif element; sequence FWDDVPNPK. Phosphoserine is present on serine 880. The interval 891–896 is required for JAK2 activation; that stretch reads ETFEHL. The segment at 896–904 is required for STAT3 phosphorylation; that stretch reads LFTKHAESV. Position 985 is a phosphotyrosine; by JAK2 (tyrosine 985). Position 1077 is a phosphotyrosine (tyrosine 1077). At tyrosine 1138 the chain carries Phosphotyrosine; by JAK2.

This sequence belongs to the type I cytokine receptor family. Type 2 subfamily. In terms of assembly, present as a mixture of monomers and dimers. The phosphorylated receptor binds a number of SH2 domain-containing proteins such as JAK2, STAT3, PTPN11, and SOCS3. Interaction with SOCS3 inhibits JAK/STAT signaling and MAPK cascade. Post-translationally, on ligand binding, phosphorylated on two conserved C-terminal tyrosine residues (isoform B only) by JAK2. Tyr-985 is required for complete binding and activation of PTPN11, ERK/FOS activation,for interaction with SOCS3 and SOCS3 mediated inhibition of leptin signaling. Phosphorylation on Tyr-1138 is required for STAT3 binding/activation. Phosphorylation of Tyr-1077 has a more accessory role. In terms of tissue distribution, isoform B is expressed in kidney, liver, lung, ovary, spleen and uterus. Increased level in uterus during gestation. Isoform A and isoform C are predominantly expressed in cerebral microvessels and choroid plexus, with lower levels in cortex, cerebellum and hypothalamus but also liver and lung. Isoform F is expressed at high levels in brain, liver and spleen and less in stomach, kidney, thymus, heart, lung and hypothalamus.

Its subcellular location is the cell membrane. It is found in the basolateral cell membrane. The protein localises to the secreted. In terms of biological role, receptor for hormone LEP/leptin. On ligand binding, mediates LEP central and peripheral effects through the activation of different signaling pathways such as JAK2/STAT3 and MAPK cascade/FOS. In the hypothalamus, LEP acts as an appetite-regulating factor that induces a decrease in food intake and an increase in energy consumption by inducing anorexinogenic factors and suppressing orexigenic neuropeptides, also regulates bone mass and secretion of hypothalamo-pituitary-adrenal hormones. In the periphery, increases basal metabolism, influences reproductive function, regulates pancreatic beta-cell function and insulin secretion, is pro-angiogenic and affects innate and adaptive immunity. Control of energy homeostasis and melanocortin production (stimulation of POMC and full repression of AgRP transcription) is mediated by STAT3 signaling, whereas distinct signals regulate NPY and the control of fertility, growth and glucose homeostasis. Involved in the regulation of counter-regulatory response to hypoglycemia by inhibiting neurons of the parabrachial nucleus. Has a specific effect on T lymphocyte responses, differentially regulating the proliferation of naive and memory T-cells. Leptin increases Th1 and suppresses Th2 cytokine production. Functionally, may transport LEP across the blood-brain barrier. Binds LEP and mediates LEP endocytosis. Does not induce phosphorylation of and activate STAT3. Its function is as follows. Antagonizes Isoform A and isoform B-mediated LEP binding and endocytosis. The protein is Leptin receptor (Lepr) of Rattus norvegicus (Rat).